A 957-amino-acid polypeptide reads, in one-letter code: Vacuolar membrane protease (957 aa).

At 1–10 the chain is on the cytoplasmic side; that stretch reads MARYNPFSFT. The chain crosses the membrane as a helical span at residues 11–31; sequence PGPVVFFTTVIYVGLFAALLV. Residues 32–369 lie on the Vacuolar side of the membrane; it reads THLTVPDYPS…RVFVVFQLHT (338 aa). N-linked (GlcNAc...) asparagine glycans are attached at residues N48, N105, and N136. Zn(2+) contacts are provided by H152 and D164. Catalysis depends on E198, which acts as the Proton acceptor. Zn(2+)-binding residues include E199, E224, and H297. The helical transmembrane segment at 370–390 threads the bilayer; that stretch reads LFALCVTLLVVAPITLIGLTF. Topologically, residues 391–423 are cytoplasmic; that stretch reads GLSKADKNYLLARKAFVYSSDDDNPVQLYGWRG. A helical membrane pass occupies residues 424–444; that stretch reads FFRFPIIFISATAVVVALAYL. Residues 445-450 are Vacuolar-facing; sequence LVRFNA. The chain crosses the membrane as a helical span at residues 451–471; it reads FIIYSSPFAVWSMMLSAWFFV. Residues 472-490 lie on the Cytoplasmic side of the membrane; that stretch reads AWFFSRGADAMRPSALQRM. Residues 491-511 form a helical membrane-spanning segment; sequence YALIWLFIGSFVLLTIVTVFV. Residues 512–521 are Vacuolar-facing; that stretch reads NNYQVVAGYP. The helical transmembrane segment at 522-542 threads the bilayer; the sequence is ALFYFAVVFVAIMLSYLELFF. Residues 543–642 are Cytoplasmic-facing; it reads APTKSAYARH…YPGEQEWSGK (100 aa). Disordered regions lie at residues 559-586 and 603-627; these read SRRN…PVAD and FTRY…SQRL. Residues 603-613 are compositionally biased toward basic and acidic residues; it reads FTRYGSRRDSA. Residues 643 to 663 form a helical membrane-spanning segment; the sequence is LPSWIWIIQLLLLAPLVIVLV. Over 664–685 the chain is Vacuolar; that stretch reads GQVALLLTSALYQTPSDGNSPL. A helical membrane pass occupies residues 686–706; the sequence is FIYLAIAALSVLLLAPTGPFI. Residues 707–713 lie on the Cytoplasmic side of the membrane; the sequence is HRFTYHV. Residues 714–734 form a helical membrane-spanning segment; sequence PTFLFLVCLGTVIYNLVAFPF. Topologically, residues 735-957 are vacuolar; sequence SRDHRLKVYF…LVEGFKRFEI (223 aa). Residues N782, N818, and N834 are each glycosylated (N-linked (GlcNAc...) asparagine).

This sequence belongs to the peptidase M28 family. Zn(2+) serves as cofactor.

Its subcellular location is the vacuole membrane. May be involved in vacuolar sorting and osmoregulation. This is Vacuolar membrane protease from Pyrenophora teres f. teres (strain 0-1) (Barley net blotch fungus).